A 487-amino-acid polypeptide reads, in one-letter code: Reticulon-like protein B21 (487 aa).

Residues 1 to 22 (MTPRRSLSSSDSNDKSPSVSVV) are compositionally biased toward low complexity. Disordered regions lie at residues 1 to 43 (MTPR…PGRV), 65 to 86 (LRKV…TEQE), and 113 to 149 (KSNE…EKKS). Basic and acidic residues predominate over residues 26–38 (ARSESVEGIEKKT). Residues 118 to 143 (EQIDNGDQEIGDQDDYEEDGDEEEER) are compositionally biased toward acidic residues. Residues 230–419 (LVDLVMWRDV…FTLVWNLSSV (190 aa)) form the Reticulon domain. 4 helical membrane passes run 242–262 (STLV…ANDL), 264–284 (FSFI…MFVL), 354–374 (ITLW…PKIF), and 413–433 (VWNL…LVAF). The span at 446-463 (QADDDEDDNEEEEAEEEK) shows a compositional bias: acidic residues. Positions 446–487 (QADDDEDDNEEEEAEEEKEQVPPKHKRAPPHMMMPNKLKKIS) are disordered.

The protein localises to the endoplasmic reticulum membrane. The sequence is that of Reticulon-like protein B21 (RTNLB21) from Arabidopsis thaliana (Mouse-ear cress).